The chain runs to 505 residues: Tyrosine-protein kinase FRK (505 aa).

Residues Ser-37 and Ser-40 each carry the phosphoserine modification. Residues 42–110 (RHGHYFVALF…PSNYVAEDRS (69 aa)) enclose the SH3 domain. One can recognise an SH2 domain in the interval 116–208 (WFFGAIGRSD…GLCVKLGKPC (93 aa)). Thr-178 bears the Phosphothreonine mark. Residues 234 to 491 (IQLLKRLGSG…TLRWKLEDYF (258 aa)) enclose the Protein kinase domain. ATP-binding positions include 240–248 (LGSGQFGEV) and Lys-262. Asp-354 functions as the Proton acceptor in the catalytic mechanism. Tyr-387 is subject to Phosphotyrosine; by autocatalysis.

This sequence belongs to the protein kinase superfamily. Tyr protein kinase family. SRC subfamily. In terms of assembly, interacts (via the SH3-domain) with PTEN. Interacts with RB1. Predominantly expressed in epithelial derived cell lines and tissues, especially normal liver, kidney, breast and colon.

The protein resides in the cytoplasm. Its subcellular location is the nucleus. The enzyme catalyses L-tyrosyl-[protein] + ATP = O-phospho-L-tyrosyl-[protein] + ADP + H(+). Non-receptor tyrosine-protein kinase that negatively regulates cell proliferation. Positively regulates PTEN protein stability through phosphorylation of PTEN on 'Tyr-336', which in turn prevents its ubiquitination and degradation, possibly by reducing its binding to NEDD4. May function as a tumor suppressor. The sequence is that of Tyrosine-protein kinase FRK (FRK) from Homo sapiens (Human).